Consider the following 85-residue polypeptide: UPF0291 protein SAK_0343 (85 aa).

The disordered stretch occupies residues 58 to 85 (GNDVTPEKLRQVQREKGLHGRSLDDPNS). The segment covering 62–85 (TPEKLRQVQREKGLHGRSLDDPNS) has biased composition (basic and acidic residues).

Belongs to the UPF0291 family.

It localises to the cytoplasm. The polypeptide is UPF0291 protein SAK_0343 (Streptococcus agalactiae serotype Ia (strain ATCC 27591 / A909 / CDC SS700)).